A 270-amino-acid polypeptide reads, in one-letter code: Formamidopyrimidine-DNA glycosylase (270 aa).

The active-site Schiff-base intermediate with DNA is Pro-2. The Proton donor role is filled by Glu-3. Residue Lys-59 is the Proton donor; for beta-elimination activity of the active site. 3 residues coordinate DNA: His-91, Arg-110, and Lys-151. The FPG-type zinc finger occupies 236–270 (RVYGRDKEPCVTCGQQVKSKVLGGRNTFWCSRCQK). Arg-260 serves as the catalytic Proton donor; for delta-elimination activity.

It belongs to the FPG family. As to quaternary structure, monomer. Requires Zn(2+) as cofactor.

The enzyme catalyses Hydrolysis of DNA containing ring-opened 7-methylguanine residues, releasing 2,6-diamino-4-hydroxy-5-(N-methyl)formamidopyrimidine.. It catalyses the reaction 2'-deoxyribonucleotide-(2'-deoxyribose 5'-phosphate)-2'-deoxyribonucleotide-DNA = a 3'-end 2'-deoxyribonucleotide-(2,3-dehydro-2,3-deoxyribose 5'-phosphate)-DNA + a 5'-end 5'-phospho-2'-deoxyribonucleoside-DNA + H(+). Involved in base excision repair of DNA damaged by oxidation or by mutagenic agents. Acts as a DNA glycosylase that recognizes and removes damaged bases. Has a preference for oxidized purines, such as 7,8-dihydro-8-oxoguanine (8-oxoG). Has AP (apurinic/apyrimidinic) lyase activity and introduces nicks in the DNA strand. Cleaves the DNA backbone by beta-delta elimination to generate a single-strand break at the site of the removed base with both 3'- and 5'-phosphates. The polypeptide is Formamidopyrimidine-DNA glycosylase (Bdellovibrio bacteriovorus (strain ATCC 15356 / DSM 50701 / NCIMB 9529 / HD100)).